A 226-amino-acid polypeptide reads, in one-letter code: 7-cyano-7-deazaguanine synthase (226 aa).

ATP is bound at residue 10–20; the sequence is FSGGQDSTTLA. Cys-190, Cys-205, Cys-208, and Cys-211 together coordinate Zn(2+).

It belongs to the QueC family. The cofactor is Zn(2+).

The catalysed reaction is 7-carboxy-7-deazaguanine + NH4(+) + ATP = 7-cyano-7-deazaguanine + ADP + phosphate + H2O + H(+). The protein operates within purine metabolism; 7-cyano-7-deazaguanine biosynthesis. Functionally, catalyzes the ATP-dependent conversion of 7-carboxy-7-deazaguanine (CDG) to 7-cyano-7-deazaguanine (preQ(0)). This Helicobacter pylori (strain Shi470) protein is 7-cyano-7-deazaguanine synthase.